The following is a 663-amino-acid chain: Protein MICRORCHIDIA 6 (663 aa).

A disordered region spans residues Met1 to Ser77. Over residues Ser49–Val62 the composition is skewed to polar residues. Positions Lys552–Ser559 match the Nuclear localization signal motif. The stretch at Asp614–Arg659 forms a coiled coil.

This sequence belongs to the MORC ATPase protein family. In terms of assembly, homodimer and heterodimers with MORC1/CRT1 and MORC2. Interacts directly with SUVH9. Component of an RNA-directed DNA methylation (RdDM) complex that contains at least MORC6, MORC1/CRT1, MORC2, SWI3D and SUVH9. Stimulated by interaction with DMS3. Interacts with IDN2, SWI3B, SWI3C and SWI3D. Mg(2+) is required as a cofactor. It depends on Mn(2+) as a cofactor.

It localises to the nucleus. Its activity is regulated as follows. Stimulated by DMS3. Functionally, involved in RNA-directed DNA methylation (RdDM) as a component of the RdDM machinery and required for gene silencing. Together with SUVH2 and SUVH9, regulates the silencing of some transposable elements (TEs). Exhibits ATPase activity. May also be involved in the regulation of chromatin architecture/condensation to maintain gene silencing. Binds DNA/RNA in a non-specific manner and exhibits endonuclease activity. Probably involved in DNA repair. Positive regulator of defense against the oomycete Hyaloperonospora arabidopsidis (Hpa). The polypeptide is Protein MICRORCHIDIA 6 (Arabidopsis thaliana (Mouse-ear cress)).